A 340-amino-acid polypeptide reads, in one-letter code: MPEWPPCLSVAPALVITMAAGKGAPLSPSAENRWRLSEPELGRGCKPVLLEKTNRLGPEAAVGRAGRDVGSAELALLVAPGKPRPGKPLPPKTRGEQRQSAFTELPRMKDRQVDAQAQEREHDDPTGQPGAPQLTQNIPRGPAGSKVFSVWPSGARSEQRSAFSKPTKRPAERPELTSVFPAGESADALGELSGLLNTTDLACWGRLSTPKLLVGDLWNLQALPQNAPLCSTFLGAPTLWLEHTQAQVPPPSSSSTTSWALLPPTLTSLGLSTQNWCAKCNLSFRLTSDLVFHMRSHHKKEHAGPDPHSQKRREEALACPVCQEHFRERHHLSRHMTSHS.

The tract at residues 72–187 (AELALLVAPG…SVFPAGESAD (116 aa)) is important for transcriptional repression activity. Residues 77–180 (LVAPGKPRPG…AERPELTSVF (104 aa)) form a disordered region. A compositionally biased stretch (pro residues) spans 82 to 91 (KPRPGKPLPP). Residues 106–125 (PRMKDRQVDAQAQEREHDDP) show a composition bias toward basic and acidic residues. 2 C2H2-type zinc fingers span residues 275-302 (NWCA…KKEH) and 317-339 (LACP…MTSH). A Nuclear localization signal motif is present at residues 298 to 305 (HKKEHAGP).

The protein belongs to the krueppel C2H2-type zinc-finger protein family. As to quaternary structure, interacts with OLIG2.

Its subcellular location is the nucleus. In terms of biological role, transcriptional repressor. Plays a role in oligodendrocyte differentiation, together with OLIG2. Mediates Notch signaling-activated formation of oligodendrocyte precursors. Promotes differentiation of adult neural stem progenitor cells (NSPCs) into mature oligodendrocytes and contributes to remyelination following nerve injury. This Homo sapiens (Human) protein is Zinc finger protein 488 (ZNF488).